Here is a 576-residue protein sequence, read N- to C-terminus: MDEQITGGYSEPCGQCAAVDWGVSDEGQFFCKSCHNVIEKIREVEDVTSLHHKHGRISIVRKPKKKKHDSEREWLVCEGFQFILKHQAKALVSLGVCMKFETEVLWNFWKRYLQNTRQAFTENPVSTARFEVFMKSQSGSESDTQSHQSCYSEASSDTEMSVSGISVDGRSAVSSESLHSIPQKGRRGRVSNLMSMPRTLAMCYLALLWVREAITLTDLLRMVAEGHIPYLHLHETFPAEMRMFGKDVQIFRVLFFPSYAFIKKEALVLAKIMKLPSFPTISQDCLFHPVPLTVRYLLEANLPDALHVWVQKVITGAGMDSDSFLTFDPTDKKPHLLSYDVQAVAVIIVAMKLLFKLDDHVEWKLSHDAAKKKNNKVFSLERWFNIVQPVLEQARLKEEQEEARRQWNFANPFITNLKRKSLVLKKRRVTDHLQQRFQKFADPAPEQSTSTTNSHTSFRFSWGEEEGSDGPSMFNQNLDCTVKAKAVNGLANQRYWHPELRICPENKCVSHFSKFEPSLPRMFVWVLDLFSFILGVLQSDVYEEVLNVERRFLKKNYRLDSRLTSSHLKKKKGPIL.

An RRN7-type zinc finger spans residues 6–39 (TGGYSEPCGQCAAVDWGVSDEGQFFCKSCHNVIE). The Zn(2+) site is built by C13, C16, C31, and C34. The interval 40-70 (KIREVEDVTSLHHKHGRISIVRKPKKKKHDS) is B-reader. A B-linker region spans residues 71 to 73 (ERE). Residues 74 to 246 (WLVCEGFQFI…FPAEMRMFGK (173 aa)) form an N-terminal cyclin fold region. Residues 137 to 157 (QSGSESDTQSHQSCYSEASSD) are disordered. Positions 247–357 (DVQIFRVLFF…IVAMKLLFKL (111 aa)) are C-terminal cyclin fold.

This sequence belongs to the RRN7/TAF1B family.

It localises to the nucleus. The protein localises to the nucleolus. Component of RNA polymerase I core factor complex that acts as a GTF2B/TFIIB-like factor and plays a key role in multiple steps during transcription initiation such as pre-initiation complex (PIC) assembly and postpolymerase recruitment events in polymerase I (Pol I) transcription. Binds rDNA promoters and plays a role in Pol I recruitment. The protein is TATA box-binding protein-associated factor RNA polymerase I subunit B (taf1b) of Danio rerio (Zebrafish).